Here is a 106-residue protein sequence, read N- to C-terminus: UPF0060 membrane protein RHE_CH01408 (106 aa).

The next 4 helical transmembrane spans lie at 4-24, 30-50, 59-79, and 86-106; these read IIYA…WAWL, AWWL…LTLV, FAAY…LIEG, and DIGG…APRA.

The protein belongs to the UPF0060 family.

It is found in the cell inner membrane. The sequence is that of UPF0060 membrane protein RHE_CH01408 from Rhizobium etli (strain ATCC 51251 / DSM 11541 / JCM 21823 / NBRC 15573 / CFN 42).